We begin with the raw amino-acid sequence, 185 residues long: Monothiol glutaredoxin-S4, mitochondrial (185 aa).

Residues 1–36 (MARLMSSALIRGLVRSSCSPTVAAVAQPTIHQFRNY) constitute a mitochondrion transit peptide. A disordered region spans residues 37-74 (SSGLGGDSTATGDSSSTRVAADPDTHQDFQPTTKSSNM). Over residues 43–53 (DSTATGDSSST) the composition is skewed to low complexity. A compositionally biased stretch (polar residues) spans 64–74 (DFQPTTKSSNM). One can recognise a Glutaredoxin domain in the interval 77–179 (DDIVSQDIKE…DVLGDIAQKR (103 aa)). Residue K94 coordinates glutathione. C102 is a binding site for [2Fe-2S] cluster. Glutathione contacts are provided by residues K131, F143, and 156-157 (SD).

This sequence belongs to the glutaredoxin family. CGFS subfamily.

It localises to the mitochondrion. In terms of biological role, may only reduce GSH-thiol disulfides, but not protein disulfides. This is Monothiol glutaredoxin-S4, mitochondrial (GRXS4) from Oryza sativa subsp. japonica (Rice).